We begin with the raw amino-acid sequence, 309 residues long: Putative F-box protein At4g05475 (309 aa).

Residues methionine 1–serine 26 form a disordered region. One can recognise an F-box domain in the interval arginine 37–isoleucine 84.

This is Putative F-box protein At4g05475 from Arabidopsis thaliana (Mouse-ear cress).